The primary structure comprises 72 residues: Translation initiation factor IF-1 1 (72 aa).

Residues 1 to 72 (MSKDDVIQMQ…TRARIVFRSK (72 aa)) enclose the S1-like domain.

Belongs to the IF-1 family. Component of the 30S ribosomal translation pre-initiation complex which assembles on the 30S ribosome in the order IF-2 and IF-3, IF-1 and N-formylmethionyl-tRNA(fMet); mRNA recruitment can occur at any time during PIC assembly.

It is found in the cytoplasm. In terms of biological role, one of the essential components for the initiation of protein synthesis. Stabilizes the binding of IF-2 and IF-3 on the 30S subunit to which N-formylmethionyl-tRNA(fMet) subsequently binds. Helps modulate mRNA selection, yielding the 30S pre-initiation complex (PIC). Upon addition of the 50S ribosomal subunit IF-1, IF-2 and IF-3 are released leaving the mature 70S translation initiation complex. The polypeptide is Translation initiation factor IF-1 1 (Bordetella avium (strain 197N)).